A 295-amino-acid polypeptide reads, in one-letter code: Large ribosomal subunit protein uL15m (295 aa).

The transit peptide at 1–20 directs the protein to the mitochondrion; it reads MAGTARGCGTSLDLLRSLPR. The interval 21-67 is disordered; it reads VSLANLKPSPNSRKRERRPRDRRRGRKCGRGHKGERQRGTRPRLGFE. A compositionally biased stretch (basic residues) spans 32–51; that stretch reads SRKRERRPRDRRRGRKCGRG.

Belongs to the universal ribosomal protein uL15 family. As to quaternary structure, component of the mitochondrial ribosome large subunit (39S) which comprises a 16S rRNA and about 50 distinct proteins.

The protein resides in the mitochondrion. The chain is Large ribosomal subunit protein uL15m (Mrpl15) from Mus musculus (Mouse).